A 261-amino-acid polypeptide reads, in one-letter code: Pyridoxine-5'-phosphate oxidase (261 aa).

A pyridoxal 5'-phosphate-binding site is contributed by 42 to 45 (RGDP). 95-98 (RMVL) contributes to the FMN binding site. Position 100 (lysine 100) interacts with pyridoxal 5'-phosphate. FMN-binding positions include 110–111 (FT), 116–117 (RK), and glutamine 139. Residues tyrosine 157, arginine 161, and serine 165 each coordinate pyridoxal 5'-phosphate. FMN-binding positions include 174–175 (QS) and tryptophan 219. 225-227 (RLH) serves as a coordination point for pyridoxal 5'-phosphate. Arginine 229 serves as a coordination point for FMN. Position 238 is a phosphothreonine (threonine 238). Serine 241 carries the phosphoserine modification.

It belongs to the pyridoxamine 5'-phosphate oxidase family. In terms of assembly, homodimer. The cofactor is FMN.

The enzyme catalyses pyridoxamine 5'-phosphate + O2 + H2O = pyridoxal 5'-phosphate + H2O2 + NH4(+). The catalysed reaction is pyridoxine 5'-phosphate + O2 = pyridoxal 5'-phosphate + H2O2. It participates in cofactor metabolism; pyridoxal 5'-phosphate salvage; pyridoxal 5'-phosphate from pyridoxamine 5'-phosphate: step 1/1. It functions in the pathway cofactor metabolism; pyridoxal 5'-phosphate salvage; pyridoxal 5'-phosphate from pyridoxine 5'-phosphate: step 1/1. In terms of biological role, catalyzes the oxidation of either pyridoxine 5'-phosphate (PNP) or pyridoxamine 5'-phosphate (PMP) into pyridoxal 5'-phosphate (PLP). This is Pyridoxine-5'-phosphate oxidase (PNPO) from Bos taurus (Bovine).